The following is a 389-amino-acid chain: Alkanesulfonate monooxygenase (389 aa).

The protein belongs to the SsuD family.

The enzyme catalyses an alkanesulfonate + FMNH2 + O2 = an aldehyde + FMN + sulfite + H2O + 2 H(+). Catalyzes the desulfonation of aliphatic sulfonates. The polypeptide is Alkanesulfonate monooxygenase (Rhizobium etli (strain CIAT 652)).